The chain runs to 1235 residues: Bromodomain-containing protein 8 (1235 aa).

Residue K85 is modified to N6-acetyllysine. A coiled-coil region spans residues 97–171 (VRKLTAERVE…ATDAAYQARQ (75 aa)). A Phosphothreonine modification is found at R124. L128 and D144 each carry phosphoserine. Positions 186–205 (RSPIDSASPGGDYPLGDLTP) are disordered. At A264 the chain carries Phosphothreonine. S268, S284, S383, and S387 each carry phosphoserine. K469 participates in a covalent cross-link: Glycyl lysine isopeptide (Lys-Gly) (interchain with G-Cter in SUMO2). K481 carries the N6-acetyllysine; alternate modification. K481 is covalently cross-linked (Glycyl lysine isopeptide (Lys-Gly) (interchain with G-Cter in SUMO1); alternate). Residue K481 forms a Glycyl lysine isopeptide (Lys-Gly) (interchain with G-Cter in SUMO2); alternate linkage. Glycyl lysine isopeptide (Lys-Gly) (interchain with G-Cter in SUMO2) cross-links involve residues K509 and K575. The interval 551 to 597 (TAAGEIVEADVAIGKGDETPLTNVKTEASPESMLSPSHGSNPIEDPL) is disordered. A Phosphoserine modification is found at S579. Residue K612 forms a Glycyl lysine isopeptide (Lys-Gly) (interchain with G-Cter in SUMO2) linkage. Residues S621, S637, and S641 each carry the phosphoserine modification. Positions 621–672 (SQIKDAPGEDEEEDGVSEAASLEEPKEEDQGEGYLSEMDNEPPVSESDDGFS) are disordered. One can recognise a Bromo 1 domain in the interval 706 to 811 (IQAQKIWKKA…RDVLEQIQQF (106 aa)). Disordered regions lie at residues 827–848 (AKSL…DSVP), 903–940 (ETED…AARK), and 966–999 (ESSE…ETEE). The span at 831-846 (RGRDSTRKQDASEKDS) shows a compositional bias: basic and acidic residues. Over residues 905 to 915 (EDPEAEELEES) the composition is skewed to acidic residues. L924 is subject to Phosphoserine. Residues 979-999 (QEGREIKASEGERELCRETEE) show a composition bias toward basic and acidic residues. Positions 1099 to 1207 (DDPVQDHLLF…QEVLEQIQVL (109 aa)) constitute a Bromo 2 domain.

Component of the NuA4 histone acetyltransferase complex which contains the catalytic subunit KAT5/TIP60 and the subunits EP400, TRRAP/PAF400, BRD8/SMAP, EPC1, DMAP1/DNMAP1, RUVBL1/TIP49, RUVBL2, ING3, actin, ACTL6A/BAF53A, MORF4L1/MRG15, MORF4L2/MRGX, MRGBP, YEATS4/GAS41, VPS72/YL1 and MEAF6. The NuA4 complex interacts with MYC and the adenovirus E1A protein. Component of a NuA4-related complex which contains EP400, TRRAP/PAF400, SRCAP, BRD8/SMAP, EPC1, DMAP1/DNMAP1, RUVBL1/TIP49, RUVBL2, actin, ACTL6A/BAF53A, VPS72 and YEATS4/GAS41. BRD8 isoform 2 interacts with RXRA/NR2B1 and THRB/ERBA2. Component of a SWR1-like complex. In terms of tissue distribution, expressed in adipose tissue, brain, heart, kidney, liver, lung, pancreas, placenta and skeletal muscle.

It is found in the nucleus. Functionally, may act as a coactivator during transcriptional activation by hormone-activated nuclear receptors (NR). Isoform 2 stimulates transcriptional activation by AR/DHTR, ESR1/NR3A1, RXRA/NR2B1 and THRB/ERBA2. At least isoform 1 and isoform 2 are components of the NuA4 histone acetyltransferase (HAT) complex which is involved in transcriptional activation of select genes principally by acetylation of nucleosomal histones H4 and H2A. This modification may both alter nucleosome - DNA interactions and promote interaction of the modified histones with other proteins which positively regulate transcription. This complex may be required for the activation of transcriptional programs associated with oncogene and proto-oncogene mediated growth induction, tumor suppressor mediated growth arrest and replicative senescence, apoptosis, and DNA repair. NuA4 may also play a direct role in DNA repair when recruited to sites of DNA damage. Component of a SWR1-like complex that specifically mediates the removal of histone H2A.Z/H2AZ1 from the nucleosome. This is Bromodomain-containing protein 8 (BRD8) from Homo sapiens (Human).